A 332-amino-acid chain; its full sequence is 2,3-diketo-L-gulonate reductase (332 aa).

The active-site Proton donor is the His-44. Residues 168–174 (ITMVDMS), 224–225 (WK), and 304–306 (GHE) contribute to the NAD(+) site.

Belongs to the LDH2/MDH2 oxidoreductase family. DlgD subfamily. As to quaternary structure, homodimer.

The protein resides in the cytoplasm. The catalysed reaction is 3-dehydro-L-gulonate + NAD(+) = 2,3-dioxo-L-gulonate + NADH + H(+). It catalyses the reaction 3-dehydro-L-gulonate + NADP(+) = 2,3-dioxo-L-gulonate + NADPH + H(+). Functionally, catalyzes the reduction of 2,3-diketo-L-gulonate in the presence of NADH, to form 3-keto-L-gulonate. In Escherichia fergusonii (strain ATCC 35469 / DSM 13698 / CCUG 18766 / IAM 14443 / JCM 21226 / LMG 7866 / NBRC 102419 / NCTC 12128 / CDC 0568-73), this protein is 2,3-diketo-L-gulonate reductase.